A 215-amino-acid polypeptide reads, in one-letter code: dITP/XTP pyrophosphatase (215 aa).

A substrate-binding site is contributed by 13–18; the sequence is THNTGK. D74 serves as the catalytic Proton acceptor. Position 74 (D74) interacts with Mg(2+). Residues S75, 163-166, K186, and 199-200 each bind substrate; these read FGFD and HR.

The protein belongs to the HAM1 NTPase family. Homodimer. It depends on Mg(2+) as a cofactor.

It carries out the reaction XTP + H2O = XMP + diphosphate + H(+). The enzyme catalyses dITP + H2O = dIMP + diphosphate + H(+). It catalyses the reaction ITP + H2O = IMP + diphosphate + H(+). In terms of biological role, pyrophosphatase that catalyzes the hydrolysis of nucleoside triphosphates to their monophosphate derivatives, with a high preference for the non-canonical purine nucleotides XTP (xanthosine triphosphate), dITP (deoxyinosine triphosphate) and ITP. Seems to function as a house-cleaning enzyme that removes non-canonical purine nucleotides from the nucleotide pool, thus preventing their incorporation into DNA/RNA and avoiding chromosomal lesions. The sequence is that of dITP/XTP pyrophosphatase from Bartonella quintana (strain Toulouse) (Rochalimaea quintana).